The following is an 82-amino-acid chain: Small ribosomal subunit protein bS16 (82 aa).

Belongs to the bacterial ribosomal protein bS16 family.

The protein is Small ribosomal subunit protein bS16 of Synechococcus elongatus (strain ATCC 33912 / PCC 7942 / FACHB-805) (Anacystis nidulans R2).